Consider the following 534-residue polypeptide: CTP synthase (534 aa).

Positions 1–266 are amidoligase domain; the sequence is MKTKFIFVTG…DEQVVEKLNI (266 aa). Serine 14 contributes to the CTP binding site. UTP is bound at residue serine 14. ATP contacts are provided by residues 15-20 and aspartate 72; that span reads SIGKGL. Aspartate 72 and glutamate 140 together coordinate Mg(2+). CTP-binding positions include 147–149, 187–192, and lysine 223; these read DIE and KTKPTQ. Residues 187-192 and lysine 223 contribute to the UTP site; that span reads KTKPTQ. One can recognise a Glutamine amidotransferase type-1 domain in the interval 292–534; it reads RIAIVGKYVN…IAAALHNIKA (243 aa). Glycine 354 serves as a coordination point for L-glutamine. Cysteine 381 serves as the catalytic Nucleophile; for glutamine hydrolysis. L-glutamine contacts are provided by residues 382–385, glutamate 405, and arginine 462; that span reads LGMQ. Active-site residues include histidine 507 and glutamate 509.

Belongs to the CTP synthase family. Homotetramer.

It carries out the reaction UTP + L-glutamine + ATP + H2O = CTP + L-glutamate + ADP + phosphate + 2 H(+). It catalyses the reaction L-glutamine + H2O = L-glutamate + NH4(+). The catalysed reaction is UTP + NH4(+) + ATP = CTP + ADP + phosphate + 2 H(+). Its pathway is pyrimidine metabolism; CTP biosynthesis via de novo pathway; CTP from UDP: step 2/2. With respect to regulation, allosterically activated by GTP, when glutamine is the substrate; GTP has no effect on the reaction when ammonia is the substrate. The allosteric effector GTP functions by stabilizing the protein conformation that binds the tetrahedral intermediate(s) formed during glutamine hydrolysis. Inhibited by the product CTP, via allosteric rather than competitive inhibition. Catalyzes the ATP-dependent amination of UTP to CTP with either L-glutamine or ammonia as the source of nitrogen. Regulates intracellular CTP levels through interactions with the four ribonucleotide triphosphates. The protein is CTP synthase of Geotalea uraniireducens (strain Rf4) (Geobacter uraniireducens).